Consider the following 205-residue polypeptide: Transmembrane emp24 domain-containing protein A (205 aa).

The N-terminal stretch at 1-24 (MMNNKLLLLVIALLCIASNSIVES) is a signal peptide. Residues 25–172 (FSFKVSAKVE…RNTAESTNSR (148 aa)) are Lumenal-facing. The region spanning 34 to 116 (EECIYEEIGV…DKTVSFILSV (83 aa)) is the GOLD domain. Residues 173–193 (VLWWSVFEAFVLIALSIWQIY) traverse the membrane as a helical segment. At 194–205 (YLRRFFEVKRAV) the chain is on the cytoplasmic side.

This sequence belongs to the EMP24/GP25L family.

The protein resides in the cytoplasmic vesicle membrane. Could have a role in the budding of coatomer-coated and other species of coated vesicles. The sequence is that of Transmembrane emp24 domain-containing protein A (empA) from Dictyostelium discoideum (Social amoeba).